The chain runs to 146 residues: MALLKKINTQVNRIMKNSSLVQNICFDRVPLFIPRLSLTVKYCLAVKLLIYLLYCWYIYSEVPSASSKFRSFTFGCVVVYHNKFFPRFIRTHSINSIRTFSKFQVIILFSIEKVTRSESKNHSYSKTDISDLHQGYNNPPSRFISQ.

Residues 38 to 60 traverse the membrane as a helical segment; it reads LTVKYCLAVKLLIYLLYCWYIYS.

Belongs to the UPF0742 family.

It localises to the cytoplasm. The protein localises to the nucleus membrane. The sequence is that of UPF0742 protein C1348.03 from Schizosaccharomyces pombe (strain 972 / ATCC 24843) (Fission yeast).